Reading from the N-terminus, the 202-residue chain is Casparian strip membrane protein 1 (202 aa).

Residues Met-1–Glu-13 are compositionally biased toward polar residues. Residues Met-1–His-30 are disordered. Residues Met-1 to Ala-42 lie on the Cytoplasmic side of the membrane. A helical membrane pass occupies residues Ile-43 to Met-63. Residues Gly-64–Thr-90 lie on the Extracellular side of the membrane. Residues Phe-91 to Ile-111 form a helical membrane-spanning segment. The Cytoplasmic segment spans residues Val-112–Asp-130. A helical transmembrane segment spans residues Thr-131–Ala-151. Residues His-152–Ala-177 lie on the Extracellular side of the membrane. Residues Val-178–Val-198 form a helical membrane-spanning segment. The Cytoplasmic segment spans residues Leu-199 to His-202.

This sequence belongs to the Casparian strip membrane proteins (CASP) family. Homodimer and heterodimers.

It is found in the cell membrane. Regulates membrane-cell wall junctions and localized cell wall deposition. Required for establishment of the Casparian strip membrane domain (CSD) and the subsequent formation of Casparian strips, a cell wall modification of the root endodermis that determines an apoplastic barrier between the intraorganismal apoplasm and the extraorganismal apoplasm and prevents lateral diffusion. The protein is Casparian strip membrane protein 1 of Triphysaria pusilla (Dwarf owl's-clover).